We begin with the raw amino-acid sequence, 317 residues long: Lactamase-like protein adaB (317 aa).

Residues His-97, His-99, Asp-101, and His-102 each contribute to the Zn(2+) site. Asp-101 (proton donor/acceptor) is an active-site residue.

This sequence belongs to the metallo-beta-lactamase superfamily. The cofactor is Zn(2+).

It carries out the reaction 3-(2,4-dioxopentyl)-2,3,6,8,9-pentahydroxy-1-oxo-1,2,3,4-tetrahydroanthracene-2-carboxyl-[ACP] = 2-acetyl-3,4a,8,10,11,12a-hexahydroxy-1,4,4a,5,12,12a-hexahydrotetracene-1,12-dione + holo-[ACP] + H(+). Its pathway is secondary metabolite biosynthesis. Lactamase-like protein; part of the gene cluster that mediates the biosynthesis of the linear tetracyclic TAN-1612 neuropeptide Y receptor antagonist. The decaketide backbone of TAN-1612 is synthesized by the non-reducing polyketide synthase adaA via condensation of one acetyl-CoA starter unit with 9 malonyl-CoA units. The FAD-dependent monooxygenase adaC then performs hydroxylation at C2 while the polaketide chain is still attached to the NRPKS adaA. The alpha-hydroxylation step at C2 appears to be crucial for the following C18-C1 Claisen cyclization and release of the C9-hydroxyl version of TAN-1612 from the NRPKS adaA, two steps performed by the lactamase-like protein adaB. Finally, the O-methyltransferase adaD performs the C9 O-methylation to complete the biosynthesis of TAN-1612. The sequence is that of Lactamase-like protein adaB from Aspergillus niger (strain ATCC MYA-4892 / CBS 513.88 / FGSC A1513).